The sequence spans 487 residues: N-succinylglutamate 5-semialdehyde dehydrogenase (487 aa).

Residue glycine 221 to glycine 226 coordinates NAD(+). Residues glutamate 244 and cysteine 278 contribute to the active site.

This sequence belongs to the aldehyde dehydrogenase family. AstD subfamily.

The catalysed reaction is N-succinyl-L-glutamate 5-semialdehyde + NAD(+) + H2O = N-succinyl-L-glutamate + NADH + 2 H(+). The protein operates within amino-acid degradation; L-arginine degradation via AST pathway; L-glutamate and succinate from L-arginine: step 4/5. Functionally, catalyzes the NAD-dependent reduction of succinylglutamate semialdehyde into succinylglutamate. This is N-succinylglutamate 5-semialdehyde dehydrogenase from Burkholderia thailandensis (strain ATCC 700388 / DSM 13276 / CCUG 48851 / CIP 106301 / E264).